The chain runs to 316 residues: Methionyl-tRNA formyltransferase (316 aa).

112–115 (SLLP) is a binding site for (6S)-5,6,7,8-tetrahydrofolate.

Belongs to the Fmt family.

It catalyses the reaction L-methionyl-tRNA(fMet) + (6R)-10-formyltetrahydrofolate = N-formyl-L-methionyl-tRNA(fMet) + (6S)-5,6,7,8-tetrahydrofolate + H(+). Functionally, attaches a formyl group to the free amino group of methionyl-tRNA(fMet). The formyl group appears to play a dual role in the initiator identity of N-formylmethionyl-tRNA by promoting its recognition by IF2 and preventing the misappropriation of this tRNA by the elongation apparatus. In Psychromonas ingrahamii (strain DSM 17664 / CCUG 51855 / 37), this protein is Methionyl-tRNA formyltransferase.